The chain runs to 295 residues: Fructose-bisphosphate aldolase class 1 (295 aa).

The active-site Proton acceptor is the E176. K213 serves as the catalytic Schiff-base intermediate with dihydroxyacetone-P.

The protein belongs to the class I fructose-bisphosphate aldolase family.

The enzyme catalyses beta-D-fructose 1,6-bisphosphate = D-glyceraldehyde 3-phosphate + dihydroxyacetone phosphate. The protein operates within carbohydrate degradation; glycolysis; D-glyceraldehyde 3-phosphate and glycerone phosphate from D-glucose: step 4/4. The sequence is that of Fructose-bisphosphate aldolase class 1 from Treponema denticola (strain ATCC 35405 / DSM 14222 / CIP 103919 / JCM 8153 / KCTC 15104).